The chain runs to 295 residues: Beta-chimaerin (295 aa).

The Phorbol-ester/DAG-type zinc finger occupies Thr41 to Cys91. The Rho-GAP domain occupies Cys104–Phe295.

In terms of tissue distribution, found in cerebellum and testis.

It is found in the membrane. Its activity is regulated as follows. In the inactive state, the N terminus protrudes into the active site of the Rho-GAP domain, sterically blocking Rac binding. Phospholipid binding to the Phorbol-ester/DAG-type zinc-finger/C1 domain triggers the cooperative dissociation of these interactions, allowing the N-terminus to move out of the active site and thereby activating the enzyme. In terms of biological role, GTPase-activating protein for p21-rac. This is Beta-chimaerin (Chn2) from Rattus norvegicus (Rat).